The sequence spans 187 residues: Adenine phosphoribosyltransferase (187 aa).

The protein belongs to the purine/pyrimidine phosphoribosyltransferase family. As to quaternary structure, homodimer.

The protein resides in the cytoplasm. It catalyses the reaction AMP + diphosphate = 5-phospho-alpha-D-ribose 1-diphosphate + adenine. The protein operates within purine metabolism; AMP biosynthesis via salvage pathway; AMP from adenine: step 1/1. Functionally, catalyzes a salvage reaction resulting in the formation of AMP, that is energically less costly than de novo synthesis. This is Adenine phosphoribosyltransferase from Yersinia pestis (strain Pestoides F).